The primary structure comprises 311 residues: tRNA-cytidine(32) 2-sulfurtransferase (311 aa).

The PP-loop motif motif lies at 58 to 63 (SGGKDS). Residues Cys-133, Cys-136, and Cys-224 each contribute to the [4Fe-4S] cluster site.

Belongs to the TtcA family. Homodimer. The cofactor is Mg(2+). [4Fe-4S] cluster serves as cofactor.

Its subcellular location is the cytoplasm. It catalyses the reaction cytidine(32) in tRNA + S-sulfanyl-L-cysteinyl-[cysteine desulfurase] + AH2 + ATP = 2-thiocytidine(32) in tRNA + L-cysteinyl-[cysteine desulfurase] + A + AMP + diphosphate + H(+). It participates in tRNA modification. Its function is as follows. Catalyzes the ATP-dependent 2-thiolation of cytidine in position 32 of tRNA, to form 2-thiocytidine (s(2)C32). The sulfur atoms are provided by the cysteine/cysteine desulfurase (IscS) system. In Polaromonas sp. (strain JS666 / ATCC BAA-500), this protein is tRNA-cytidine(32) 2-sulfurtransferase.